We begin with the raw amino-acid sequence, 255 residues long: MASLSVPCVKICALNRRVGSLPGISTQRWQPQPNGISFPSDVSQNHSAFWRLRATTNEVVSNSTPMTNGGYMNGKAKTNVPEPAELSEFMAKVSGLLKLVDSKDIVELELKQLDCEIVIRKKEALQQAVPPAPVYHSMPPVMADFSMPPAQPVALPPSPTPTSTPATAKPTSAPSSSHPPLKSPMAGTFYRSPGPGEPPFVKVGDKVQKGQIVCIIEAMKLMNEIEAEKSGTIMELLAEDGKPVSVDTPLFVIAP.

The transit peptide at 1-87 (MASLSVPCVK…TNVPEPAELS (87 aa)) directs the protein to the chloroplast. The segment at 148–193 (PPAQPVALPPSPTPTSTPATAKPTSAPSSSHPPLKSPMAGTFYRSP) is disordered. Pro residues predominate over residues 149 to 162 (PAQPVALPPSPTPT). Positions 163–180 (STPATAKPTSAPSSSHPP) are enriched in low complexity. The region spanning 178–254 (HPPLKSPMAG…SVDTPLFVIA (77 aa)) is the Biotinyl-binding domain. N6-biotinyllysine is present on lysine 220.

In terms of assembly, acetyl-CoA carboxylase is a heterohexamer composed of biotin carboxyl carrier protein, biotin carboxylase and 2 subunits each of ACCase subunit alpha and ACCase plastid-coded subunit beta (accD). As to expression, primarily expressed in 7 to 10 days after flowering seeds at levels approximately 2-fold less abundant than BCCP1.

It localises to the plastid. Its subcellular location is the chloroplast. It functions in the pathway lipid metabolism; fatty acid biosynthesis. Functionally, this protein is a component of the acetyl coenzyme A carboxylase complex; first, biotin carboxylase catalyzes the carboxylation of the carrier protein and then the transcarboxylase transfers the carboxyl group to form malonyl-CoA. This Arabidopsis thaliana (Mouse-ear cress) protein is Biotin carboxyl carrier protein of acetyl-CoA carboxylase 2, chloroplastic (BCCP2).